Here is a 416-residue protein sequence, read N- to C-terminus: Serine hydroxymethyltransferase (416 aa).

(6S)-5,6,7,8-tetrahydrofolate is bound by residues L121 and 125–127; that span reads GHL. K230 carries the post-translational modification N6-(pyridoxal phosphate)lysine.

It belongs to the SHMT family. In terms of assembly, homodimer. It depends on pyridoxal 5'-phosphate as a cofactor.

Its subcellular location is the cytoplasm. It catalyses the reaction (6R)-5,10-methylene-5,6,7,8-tetrahydrofolate + glycine + H2O = (6S)-5,6,7,8-tetrahydrofolate + L-serine. It participates in one-carbon metabolism; tetrahydrofolate interconversion. Its pathway is amino-acid biosynthesis; glycine biosynthesis; glycine from L-serine: step 1/1. Its function is as follows. Catalyzes the reversible interconversion of serine and glycine with tetrahydrofolate (THF) serving as the one-carbon carrier. This reaction serves as the major source of one-carbon groups required for the biosynthesis of purines, thymidylate, methionine, and other important biomolecules. Also exhibits THF-independent aldolase activity toward beta-hydroxyamino acids, producing glycine and aldehydes, via a retro-aldol mechanism. The sequence is that of Serine hydroxymethyltransferase from Nitrosomonas europaea (strain ATCC 19718 / CIP 103999 / KCTC 2705 / NBRC 14298).